The chain runs to 353 residues: Protein pelota homolog (353 aa).

It belongs to the eukaryotic release factor 1 family. Pelota subfamily. As to quaternary structure, monomer. Requires a divalent metal cation as cofactor.

It localises to the cytoplasm. Functionally, may function in recognizing stalled ribosomes, interact with stem-loop structures in stalled mRNA molecules, and effect endonucleolytic cleavage of the mRNA. May play a role in the release non-functional ribosomes and degradation of damaged mRNAs. Has endoribonuclease activity. The protein is Protein pelota homolog of Methanothermobacter thermautotrophicus (strain ATCC 29096 / DSM 1053 / JCM 10044 / NBRC 100330 / Delta H) (Methanobacterium thermoautotrophicum).